A 1158-amino-acid chain; its full sequence is ATP-dependent helicase/deoxyribonuclease subunit B (1158 aa).

In terms of domain architecture, UvrD-like helicase ATP-binding spans 1 to 275 (MTLHAYLGRA…QYFNQLYRFN (275 aa)). 8–15 (GRAGTGKS) contributes to the ATP binding site. A UvrD-like helicase C-terminal domain is found at 269 to 583 (NQLYRFNNQD…SIGTMDLAKV (315 aa)). C784, C1112, C1115, and C1121 together coordinate [4Fe-4S] cluster.

The protein belongs to the helicase family. AddB/RexB type 1 subfamily. As to quaternary structure, heterodimer of AddA and AddB. It depends on Mg(2+) as a cofactor. [4Fe-4S] cluster is required as a cofactor.

The heterodimer acts as both an ATP-dependent DNA helicase and an ATP-dependent, dual-direction single-stranded exonuclease. Recognizes the chi site generating a DNA molecule suitable for the initiation of homologous recombination. The AddB subunit has 5' -&gt; 3' nuclease activity but not helicase activity. This chain is ATP-dependent helicase/deoxyribonuclease subunit B, found in Staphylococcus aureus (strain COL).